A 94-amino-acid chain; its full sequence is Alpha-conotoxin Cp20.3 (94 aa).

A signal peptide spans 1 to 24; the sequence is MPKLAVVLLVLLILPLSYFDAAGG. Residues 25–45 constitute a propeptide that is removed on maturation; sequence QAVQGDRRGNGLARYLQRGDR. E46 carries the post-translational modification 4-carboxyglutamate; partial. 4-carboxyglutamate is present on E49. The residue at position 55 (P55) is a 4-hydroxyproline. Cystine bridges form between C63-C72, C68-C80, C73-C90, and C78-C92.

It belongs to the conotoxin D superfamily. In terms of assembly, hetero-, homo- or pseudo-homodimer (identical sequence, different post-translational modifications). Expressed by the venom duct.

The protein resides in the secreted. Alpha-D-conopeptides act on postsynaptic membranes, they bind to the nicotinic acetylcholine receptors (nAChR) and thus inhibit them. Through its two C-terminal domains, this homodimeric protein would bind to two nAChR allosteric sites, located outside the nAChR C-loop of the principal binding face and at the adjacent binding interface in a clockwise direction. This toxin specifically blocks mammalian neuronal nAChR of the alpha-7/CHRNA7 (IC(50)=0.25 nM), alpha-3-beta-2/CHRNA3-CHRNB2 (IC(50)=2.8 nM), and alpha-4-beta-2/CHRNA4-CHRNB2 (IC(50)=28.6 nM) subtypes. Has no effect on alpha-3-beta-4/CHRNA3-CHRNB4, alpha-4-beta-4/CHRNA4-CHRNB4 and alpha-1-beta-1-epsilon-delta/CHRNA1-CHRNB1-CHRNE-CHRND subtypes of nAChRs. The chain is Alpha-conotoxin Cp20.3 from Conus capitaneus (Captain cone).